Consider the following 122-residue polypeptide: Large ribosomal subunit protein uL14 (122 aa).

This sequence belongs to the universal ribosomal protein uL14 family. Part of the 50S ribosomal subunit. Forms a cluster with proteins L3 and L19. In the 70S ribosome, L14 and L19 interact and together make contacts with the 16S rRNA in bridges B5 and B8.

Its function is as follows. Binds to 23S rRNA. Forms part of two intersubunit bridges in the 70S ribosome. The sequence is that of Large ribosomal subunit protein uL14 from Phenylobacterium zucineum (strain HLK1).